Reading from the N-terminus, the 434-residue chain is Methylenetetrahydrofolate--tRNA-(uracil-5-)-methyltransferase TrmFO (434 aa).

8-13 (GAGLAG) provides a ligand contact to FAD.

The protein belongs to the MnmG family. TrmFO subfamily. The cofactor is FAD.

It is found in the cytoplasm. The catalysed reaction is uridine(54) in tRNA + (6R)-5,10-methylene-5,6,7,8-tetrahydrofolate + NADH + H(+) = 5-methyluridine(54) in tRNA + (6S)-5,6,7,8-tetrahydrofolate + NAD(+). The enzyme catalyses uridine(54) in tRNA + (6R)-5,10-methylene-5,6,7,8-tetrahydrofolate + NADPH + H(+) = 5-methyluridine(54) in tRNA + (6S)-5,6,7,8-tetrahydrofolate + NADP(+). In terms of biological role, catalyzes the folate-dependent formation of 5-methyl-uridine at position 54 (M-5-U54) in all tRNAs. The polypeptide is Methylenetetrahydrofolate--tRNA-(uracil-5-)-methyltransferase TrmFO (Exiguobacterium sibiricum (strain DSM 17290 / CCUG 55495 / CIP 109462 / JCM 13490 / 255-15)).